We begin with the raw amino-acid sequence, 423 residues long: D-tagatose-1,6-bisphosphate aldolase subunit GatZ (423 aa).

This sequence belongs to the GatZ/KbaZ family. GatZ subfamily. In terms of assembly, forms a complex with GatY.

It participates in carbohydrate metabolism; D-tagatose 6-phosphate degradation; D-glyceraldehyde 3-phosphate and glycerone phosphate from D-tagatose 6-phosphate: step 2/2. Component of the tagatose-1,6-bisphosphate aldolase GatYZ that is required for full activity and stability of the Y subunit. Could have a chaperone-like function for the proper and stable folding of GatY. When expressed alone, GatZ does not show any aldolase activity. Is involved in the catabolism of galactitol. This Salmonella enteritidis PT4 (strain P125109) protein is D-tagatose-1,6-bisphosphate aldolase subunit GatZ.